We begin with the raw amino-acid sequence, 25 residues long: Aggression-stimulating peptide (25 aa).

In terms of tissue distribution, expressed by the skin glands of male frogs.

Its subcellular location is the secreted. Stimulates aggressive behavior in male frogs. No effect on female frogs. The polypeptide is Aggression-stimulating peptide (Leptodactylus fallax (Mountain chicken frog)).